A 388-amino-acid chain; its full sequence is UDP-4-amino-4-deoxy-L-arabinose--oxoglutarate aminotransferase (388 aa).

K183 carries the N6-(pyridoxal phosphate)lysine modification.

The protein belongs to the DegT/DnrJ/EryC1 family. ArnB subfamily. Homodimer. Requires pyridoxal 5'-phosphate as cofactor.

The catalysed reaction is UDP-4-amino-4-deoxy-beta-L-arabinose + 2-oxoglutarate = UDP-beta-L-threo-pentopyranos-4-ulose + L-glutamate. It participates in nucleotide-sugar biosynthesis; UDP-4-deoxy-4-formamido-beta-L-arabinose biosynthesis; UDP-4-deoxy-4-formamido-beta-L-arabinose from UDP-alpha-D-glucuronate: step 2/3. The protein operates within bacterial outer membrane biogenesis; lipopolysaccharide biosynthesis. Functionally, catalyzes the conversion of UDP-4-keto-arabinose (UDP-Ara4O) to UDP-4-amino-4-deoxy-L-arabinose (UDP-L-Ara4N). The modified arabinose is attached to lipid A and is required for resistance to polymyxin and cationic antimicrobial peptides. The chain is UDP-4-amino-4-deoxy-L-arabinose--oxoglutarate aminotransferase from Shewanella sediminis (strain HAW-EB3).